The primary structure comprises 345 residues: Type II methyltransferase M.AplI (345 aa).

One can recognise an SAM-dependent MTase C5-type domain in the interval 25 to 325 (LVVLDLFAGC…KSVKMTLENK (301 aa)). Residue cysteine 93 is part of the active site.

Belongs to the class I-like SAM-binding methyltransferase superfamily. C5-methyltransferase family.

The catalysed reaction is a 2'-deoxycytidine in DNA + S-adenosyl-L-methionine = a 5-methyl-2'-deoxycytidine in DNA + S-adenosyl-L-homocysteine + H(+). Functionally, a methylase, recognizes the double-stranded sequence 5'-CTGCAG-3', methylates C-4 on both strands, and protects the DNA from cleavage by the AplI endonuclease. The polypeptide is Type II methyltransferase M.AplI (aplIM) (Arthrospira platensis (strain NIES-39 / UTEX 3086 / IAM M-135) (Spirulina platensis)).